The chain runs to 517 residues: Methionine aminopeptidase 1b (517 aa).

Residues 74 to 94 are disordered; it reads YCNKENSNNNNNNNNNNNNNL. A compositionally biased stretch (low complexity) spans 79 to 94; that stretch reads NSNNNNNNNNNNNNNL. The segment at 114 to 166 adopts a C6H2-type zinc-finger fold; the sequence is ENLCSGCKKVLIKKLSCPICLKNKIFSYFCNQECFKGSWKEHQKIHENMNKEN. Zn(2+) is bound by residues C117, C120, C130, C133, C143, C147, H155, and H159. Residue H325 participates in a protein binding. The Zn(2+) site is built by D342, D353, and H419. H426 contributes to the a protein binding site. Residues E452 and E483 each contribute to the Zn(2+) site.

This sequence belongs to the peptidase M24A family. Methionine aminopeptidase type 1 subfamily. Associates with the 60S ribosomal subunit of the 80S translational complex. The cofactor is Zn(2+). Requires Co(2+) as cofactor. Mn(2+) serves as cofactor. Fe(2+) is required as a cofactor.

It is found in the cytoplasm. It carries out the reaction Release of N-terminal amino acids, preferentially methionine, from peptides and arylamides.. Inhibited by pyrimidine derivative XC11. Functionally, cotranslationally removes the N-terminal methionine from nascent proteins. The N-terminal methionine is often cleaved when the second residue in the primary sequence is small and uncharged (Met-Ala-, Cys, Gly, Pro, Ser, Thr, or Val). May play an important role in parasite growth during the blood asexual stage. The chain is Methionine aminopeptidase 1b from Plasmodium falciparum (isolate 3D7).